A 115-amino-acid polypeptide reads, in one-letter code: U3-lycotoxin-Ls1n (115 aa).

The signal sequence occupies residues 1–20 (MKFVLLFGVLLVTLFSYSSA). A propeptide spanning residues 21–44 (EMLDDFDQADEDELLSLIEKEEAR) is cleaved from the precursor. 4 cysteine pairs are disulfide-bonded: cysteine 48–cysteine 63, cysteine 55–cysteine 72, cysteine 62–cysteine 87, and cysteine 74–cysteine 85.

Belongs to the neurotoxin 19 (CSTX) family. 01 subfamily. In terms of tissue distribution, expressed by the venom gland.

The protein resides in the secreted. The polypeptide is U3-lycotoxin-Ls1n (Lycosa singoriensis (Wolf spider)).